The sequence spans 816 residues: MGNYSTAIDKKWQEKWAESGLYKFDPNKEGEKLYVLEMFSYPSGSQLHAGHWFNYGPVDSWARFKRMQGYNVFQPMGFDAFGLPAENFAIKTGIHPQDSTIKNIAKMEEQLKAMGAMFNWENEVVTCSPEYYKWTQWLFLKLYEKGLAYRKKAPVNWCPSCQTVLANEQVVDGACERCSTEVTKKDLTQWFFKITDYADELLDKLDDLDWPEKTVSMQKHWIGRSTGSQVNFKVKDSDLNFDVFTTRVDTLCGVSYVVLAPENPLVDEIVSAEQKEAVENYKEEAKKQSDIERQSISREKTGVFTGAYAIHPLTGKEVPIWVGDYVLATYGTGAVMAVPAHDERDFAFAEKFNLPINRVIEAKDGSETNLPFCEHGILVNSGEFDGLTTDEAKEKIVEKLASMGLGEKKVNFRLRDWLVSRQRYWGAPIPVVYCEECGIVPVPESQLPVELPYDVEFAPDGKSPLAKSEAFVNTTCPHCGKPAKRETDTLDTFVCSSWYYLRYPDNKNTEAPFNPELINKMLPVDKYVGGPEHACMHLLYARFITKALRDMGYLNFDEPFTSLTHQGLILGPDGLKMSKSKGNTISPDDYIKEYGADVFRMYLMFGFAYTEGGAWSDDGIKSVNRFVERIERIIDTAREAISKGENNKTTMDKAEKELNYWRHNTIKSVTDDTDKLQFNTAIARMMEFINALSKYTQEKEMNLDFLKDVVSDYLRLLAPFAPHFSEEQWSLLGNSYSIFNEAWPKFDPKALVKDEVEIAIQVNGKIKNKIMVSSDLDEEGIKAAALADEKIIASTEGKTVVKVIVIKGRLVNIVVK.

The 'HIGH' region motif lies at 40–51 (SYPSGSQLHAGH). The 'KMSKS' region signature appears at 576 to 580 (KMSKS). Lys-579 provides a ligand contact to ATP.

This sequence belongs to the class-I aminoacyl-tRNA synthetase family.

Its subcellular location is the cytoplasm. It carries out the reaction tRNA(Leu) + L-leucine + ATP = L-leucyl-tRNA(Leu) + AMP + diphosphate. The chain is Leucine--tRNA ligase from Clostridium perfringens (strain ATCC 13124 / DSM 756 / JCM 1290 / NCIMB 6125 / NCTC 8237 / Type A).